Reading from the N-terminus, the 118-residue chain is Small ribosomal subunit protein uS13 (118 aa).

The disordered stretch occupies residues S94–K118.

It belongs to the universal ribosomal protein uS13 family. In terms of assembly, part of the 30S ribosomal subunit. Forms a loose heterodimer with protein S19. Forms two bridges to the 50S subunit in the 70S ribosome.

Its function is as follows. Located at the top of the head of the 30S subunit, it contacts several helices of the 16S rRNA. In the 70S ribosome it contacts the 23S rRNA (bridge B1a) and protein L5 of the 50S subunit (bridge B1b), connecting the 2 subunits; these bridges are implicated in subunit movement. Contacts the tRNAs in the A and P-sites. The protein is Small ribosomal subunit protein uS13 of Aliivibrio fischeri (strain ATCC 700601 / ES114) (Vibrio fischeri).